The primary structure comprises 425 residues: Glucan 1,3-beta-glucosidase (425 aa).

A signal peptide spans 1-19; it reads MNLTLLLLALIFSPSLIFS. Glutamate 219 acts as the Proton donor in catalysis. 2 cysteine pairs are disulfide-bonded: cysteine 301-cysteine 423 and cysteine 326-cysteine 352. Glutamate 318 (nucleophile) is an active-site residue.

Belongs to the glycosyl hydrolase 5 (cellulase A) family.

Its subcellular location is the secreted. It catalyses the reaction Successive hydrolysis of beta-D-glucose units from the non-reducing ends of (1-&gt;3)-beta-D-glucans, releasing alpha-glucose.. In terms of biological role, beta-glucanases participate in the metabolism of beta-glucan, the main structural component of the cell wall. It could also function biosynthetically as a transglycosylase. In Schwanniomyces occidentalis (Yeast), this protein is Glucan 1,3-beta-glucosidase.